Here is a 403-residue protein sequence, read N- to C-terminus: MAIIHPKVRGFICTTTHPKGCELNVRDQIEATRKLGVREDGPKKVLVIGASSGYGLAARITAAFGFKADTLGVFFEKPGTETKAGTAGWYNAAAFDKFAKAEGLYSKSINGDAFSDEARAKVIELIKNEMGGKVDLVIYSLASPVRKLPQTGEVIRSALKPIGQPYKSTAIDTNKDTIIEASIEPATEQEIADTVTVMGGQDWQLWIDALAGANVLAEGARTVAFSYIGSDITWPIYWHGALGQAKQDLDETALRLNQKLAGEVKGGANVAVLKSVVTQASSAIPVMPLYLSMVFKIMQEKGVHEGTQDQLDRMYRDRMYRTDGAPAEVDEKGRLRLDDWELRDDVQNACKALWPQVTTENLFELTDYAGYKKQFLNLFGFERADVDYDKDVATDVKFDCVEL.

Residues 49–54, 75–76, 112–113, and 141–142 contribute to the NAD(+) site; these read GASSGY, FE, DA, and LA. Tyr227 is a substrate binding site. Tyr237 acts as the Proton donor in catalysis. Residues Lys246 and 276-278 contribute to the NAD(+) site; that span reads VVT.

It belongs to the TER reductase family. In terms of assembly, monomer.

It catalyses the reaction a 2,3-saturated acyl-[ACP] + NAD(+) = a (2E)-enoyl-[ACP] + NADH + H(+). Its pathway is lipid metabolism; fatty acid biosynthesis. Involved in the final reduction of the elongation cycle of fatty acid synthesis (FAS II). Catalyzes the reduction of a carbon-carbon double bond in an enoyl moiety that is covalently linked to an acyl carrier protein (ACP). The protein is Enoyl-[acyl-carrier-protein] reductase [NADH] of Pseudomonas putida (strain ATCC 47054 / DSM 6125 / CFBP 8728 / NCIMB 11950 / KT2440).